Reading from the N-terminus, the 608-residue chain is Elongation factor 4 (608 aa).

The 183-residue stretch at 11–193 (SKIRNFSIIA…QIVEKVPAPD (183 aa)) folds into the tr-type G domain. GTP-binding positions include 23–28 (DHGKST) and 140–143 (NKID).

Belongs to the TRAFAC class translation factor GTPase superfamily. Classic translation factor GTPase family. LepA subfamily.

The protein resides in the cell membrane. The enzyme catalyses GTP + H2O = GDP + phosphate + H(+). Functionally, required for accurate and efficient protein synthesis under certain stress conditions. May act as a fidelity factor of the translation reaction, by catalyzing a one-codon backward translocation of tRNAs on improperly translocated ribosomes. Back-translocation proceeds from a post-translocation (POST) complex to a pre-translocation (PRE) complex, thus giving elongation factor G a second chance to translocate the tRNAs correctly. Binds to ribosomes in a GTP-dependent manner. The chain is Elongation factor 4 from Bacillus cytotoxicus (strain DSM 22905 / CIP 110041 / 391-98 / NVH 391-98).